The primary structure comprises 287 residues: rRNA adenine N-6-methyltransferase (287 aa).

A compositionally biased stretch (basic residues) spans 1 to 13 (MKKKNHKYRGKKL). A disordered region spans residues 1–21 (MKKKNHKYRGKKLNRGESPNF). S-adenosyl-L-methionine-binding residues include His-25, Met-27, Gly-52, Glu-73, Asp-98, and Asn-114.

Belongs to the class I-like SAM-binding methyltransferase superfamily. rRNA adenine N(6)-methyltransferase family.

Functionally, involved in erythromycin resistance. This is rRNA adenine N-6-methyltransferase (ermD) from Bacillus licheniformis.